Reading from the N-terminus, the 397-residue chain is S-adenosylmethionine synthase (397 aa).

H15 is an ATP binding site. Residue D17 coordinates Mg(2+). K(+) is bound at residue E43. Positions 56 and 99 each coordinate L-methionine. The tract at residues 99 to 109 is flexible loop; the sequence is QSGDIAMGVDE. ATP contacts are provided by residues 175–177, 241–242, D250, 256–257, A273, and K277; these read DGK, RF, and RK. Residue D250 participates in L-methionine binding. K281 is an L-methionine binding site.

This sequence belongs to the AdoMet synthase family. In terms of assembly, homotetramer; dimer of dimers. Mg(2+) serves as cofactor. The cofactor is K(+).

It is found in the cytoplasm. The catalysed reaction is L-methionine + ATP + H2O = S-adenosyl-L-methionine + phosphate + diphosphate. The protein operates within amino-acid biosynthesis; S-adenosyl-L-methionine biosynthesis; S-adenosyl-L-methionine from L-methionine: step 1/1. Its function is as follows. Catalyzes the formation of S-adenosylmethionine (AdoMet) from methionine and ATP. The overall synthetic reaction is composed of two sequential steps, AdoMet formation and the subsequent tripolyphosphate hydrolysis which occurs prior to release of AdoMet from the enzyme. This chain is S-adenosylmethionine synthase, found in Clostridioides difficile (strain 630) (Peptoclostridium difficile).